The primary structure comprises 516 residues: 3-ketoacyl-CoA synthase 4 (516 aa).

2 helical membrane passes run 48 to 68 (LISN…SVEA) and 87 to 107 (LVSI…YVMT). Residues 104 to 393 (YVMTRPRPVY…FFMTLVVKKL (290 aa)) enclose the FAE domain. Residues Cys248, His327, His411, His415, His444, and Asn448 contribute to the active site.

It belongs to the thiolase-like superfamily. Chalcone/stilbene synthases family. As to expression, expressed at low levels in siliques, flowers, leaves and stems.

It localises to the membrane. It carries out the reaction a very-long-chain acyl-CoA + malonyl-CoA + H(+) = a very-long-chain 3-oxoacyl-CoA + CO2 + CoA. Its pathway is lipid metabolism; fatty acid biosynthesis. In Arabidopsis thaliana (Mouse-ear cress), this protein is 3-ketoacyl-CoA synthase 4.